A 320-amino-acid chain; its full sequence is Endochitinase (320 aa).

The signal sequence occupies residues 1–23 (MKRTLKVSFFILCLLPLFLGSKA). Positions 24-64 (EQCGSQAGGAVCPNGLCCSKFGFCGSTDPYCGDGCQSQCKS) constitute a Chitin-binding type-1 domain. Disulfide bonds link C26-C41, C35-C47, C40-C54, C58-C62, C101-C163, C175-C182, and C281-C313. Residue E145 is the Proton donor of the active site.

Belongs to the glycosyl hydrolase 19 family. Chitinase class I subfamily.

It carries out the reaction Random endo-hydrolysis of N-acetyl-beta-D-glucosaminide (1-&gt;4)-beta-linkages in chitin and chitodextrins.. In terms of biological role, defense against chitin-containing fungal pathogens. This is Endochitinase from Pisum sativum (Garden pea).